We begin with the raw amino-acid sequence, 578 residues long: Triokinase/FMN cyclase (578 aa).

Residues 9–336 form the DhaK domain; it reads SVAGCADDAL…IDAETTASAW (328 aa). Dihydroxyacetone-binding positions include 56–59, lysine 109, and aspartate 114; that span reads GSGH. Histidine 221 acts as the Tele-hemiaminal-histidine intermediate in catalysis. At serine 350 the chain carries Phosphoserine. Residues 372–571 enclose the DhaL domain; sequence KQMVLVLEWV…AAAILRAILE (200 aa). Residues 401 to 404, 446 to 447, glycine 486, and 494 to 495 contribute to the ATP site; these read DGDC, SS, and TM. A phosphoserine mark is found at serine 511 and serine 545. 556–558 contributes to the ATP binding site; sequence DPG.

Homodimer. Interacts with IFIH1 (via the CARD domains), the interaction is inhibited by viral infection. The cofactor is Mg(2+). It depends on Mn(2+) as a cofactor. Requires Co(2+) as cofactor.

It carries out the reaction dihydroxyacetone + ATP = dihydroxyacetone phosphate + ADP + H(+). It catalyses the reaction D-glyceraldehyde + ATP = D-glyceraldehyde 3-phosphate + ADP + H(+). The catalysed reaction is FAD = riboflavin cyclic-4',5'-phosphate + AMP + H(+). Each activity is inhibited by the substrate(s) of the other. Functionally, catalyzes both the phosphorylation of dihydroxyacetone and of glyceraldehyde, and the splitting of ribonucleoside diphosphate-X compounds among which FAD is the best substrate. Represses IFIH1-mediated cellular antiviral response. This chain is Triokinase/FMN cyclase (TKFC), found in Bos taurus (Bovine).